The chain runs to 66 residues: Alpha-actitoxin-Ms11a-1 (66 aa).

Residues M1–A24 form the signal peptide. Cystine bridges form between C26–C41, C33–C46, and C40–C61.

It localises to the secreted. It is found in the nematocyst. In terms of biological role, alpha-toxins act on postsynaptic membranes, they bind to the nicotinic acetylcholine receptors (nAChR) and thus inhibit them. This toxin competes with alpha-bungarotoxin for binding to orthosteric sites on muscle-type T.carlifornicus (IC(50)=408 nM) and human alpha-7/CHRNA7 nAChRs (IC(50)=14.16 uM). The sequence is that of Alpha-actitoxin-Ms11a-1 from Metridium senile (Brown sea anemone).